A 137-amino-acid polypeptide reads, in one-letter code: Large-conductance mechanosensitive channel (137 aa).

2 helical membrane-spanning segments follow: residues 14-34 (VLDLAVGVIIGAAFTAIINSL) and 81-101 (GSFLNAVINFLLVAFVIFLIV).

The protein belongs to the MscL family. As to quaternary structure, homopentamer.

It localises to the cell membrane. In terms of biological role, channel that opens in response to stretch forces in the membrane lipid bilayer. May participate in the regulation of osmotic pressure changes within the cell. In Chloroflexus aggregans (strain MD-66 / DSM 9485), this protein is Large-conductance mechanosensitive channel.